Consider the following 1408-residue polypeptide: ABC multidrug transporter MDR1 (1408 aa).

Residues 1–13 (MSASPSPIGAAAG) show a composition bias toward low complexity. Residues 1 to 103 (MSASPSPIGA…SISSAVPKSH (103 aa)) form a disordered region. A compositionally biased stretch (basic and acidic residues) spans 17–38 (LQARRDEEVVDSEKDALAHDSH). Helical transmembrane passes span 147-167 (FAAP…IAAG) and 223-243 (LYLM…MFIW). Residues 157–464 (VFGLLLAIAA…LAPELAAVTK (308 aa)) enclose the ABC transmembrane type-1 1 domain. N244 carries an N-linked (GlcNAc...) asparagine glycan. Helical transmembrane passes span 296-316 (KVAL…LAFV), 321-341 (LAGA…IMMT), 408-428 (IMFF…GILV), and 436-456 (GIVI…AMLA). Positions 499–744 (ISFENVRFHY…ENGPYAQLVN (246 aa)) constitute an ABC transporter 1 domain. 534–541 (GASGSGKS) is an ATP binding site. The next 2 membrane-spanning stretches (helical) occupy residues 838–858 (IFAF…AILF) and 882–902 (LWYF…SAGF). In terms of domain architecture, ABC transmembrane type-1 2 spans 838–1125 (IFAFIAAICA…VFTFVPDASK (288 aa)). N934 is a glycosylation site (N-linked (GlcNAc...) asparagine). The next 4 membrane-spanning stretches (helical) occupy residues 952–972 (GLFG…IGGC), 973–993 (IIGL…IPIL), 1072–1092 (GLTF…IIDG), and 1099–1119 (FYTV…VFTF). 2 N-linked (GlcNAc...) asparagine glycosylation sites follow: N1127 and N1182. The ABC transporter 2 domain maps to 1162–1402 (VRIEGVHFRY…KGGYYDLVQM (241 aa)). 1197 to 1204 (GPSGCGKS) provides a ligand contact to ATP. The N-linked (GlcNAc...) asparagine glycan is linked to N1404.

Belongs to the ABC transporter superfamily. ABCB family. Multidrug resistance exporter (TC 3.A.1.201) subfamily.

It localises to the cell membrane. The catalysed reaction is itraconazole(in) + ATP + H2O = itraconazole(out) + ADP + phosphate + H(+). It carries out the reaction voriconazole(in) + ATP + H2O = voriconazole(out) + ADP + phosphate + H(+). It catalyses the reaction fluconazole(in) + ATP + H2O = fluconazole(out) + ADP + phosphate + H(+). In terms of biological role, pleiotropic ABC efflux transporter that confers resistance to structurally and functionally unrelated compounds including azoles such as fluconazole (FLC), itraconazole (ITC), posaconazole (POS), nocodazole and voriconazole (VRC). The protein is ABC multidrug transporter MDR1 of Cryptococcus deuterogattii (strain R265) (Cryptococcus gattii VGII (strain R265)).